The sequence spans 119 residues: Hydrogenase maturation factor HypA (119 aa).

His2 lines the Ni(2+) pocket. Zn(2+) contacts are provided by Cys73, Cys76, Cys89, and Cys92.

Belongs to the HypA/HybF family.

In terms of biological role, involved in the maturation of [NiFe] hydrogenases. Required for nickel insertion into the metal center of the hydrogenase. The polypeptide is Hydrogenase maturation factor HypA (Cupriavidus necator (strain ATCC 17699 / DSM 428 / KCTC 22496 / NCIMB 10442 / H16 / Stanier 337) (Ralstonia eutropha)).